The following is a 297-amino-acid chain: 2-dehydropantoate 2-reductase (297 aa).

NADP(+) is bound by residues 11–16, Asn107, and Ala133; that span reads GAGAMG. Asn107 lines the substrate pocket. Lys187 functions as the Proton donor in the catalytic mechanism. 4 residues coordinate substrate: Asn191, Asn195, Asn205, and Ser251. Glu263 contacts NADP(+).

Belongs to the ketopantoate reductase family.

The protein localises to the cytoplasm. It catalyses the reaction (R)-pantoate + NADP(+) = 2-dehydropantoate + NADPH + H(+). Its pathway is cofactor biosynthesis; (R)-pantothenate biosynthesis; (R)-pantoate from 3-methyl-2-oxobutanoate: step 2/2. In terms of biological role, catalyzes the NADPH-dependent reduction of ketopantoate into pantoic acid. The chain is 2-dehydropantoate 2-reductase from Listeria monocytogenes serovar 1/2a (strain ATCC BAA-679 / EGD-e).